The primary structure comprises 386 residues: Diels-Alderase phm7 (386 aa).

The beta-sandwich motif stretch occupies residues 1-223 (MSEPTSSSSL…MVRGWSARPW (223 aa)). Substrate contacts are provided by Glu-51, Asn-84, and Lys-356. Positions 223 to 386 (WPTFMNDAYY…FGGQLQIPVP (164 aa)) are beta-barrel motif.

Belongs to the Diels-Alderase family.

The protein operates within secondary metabolite biosynthesis. Its activity is regulated as follows. 3-aminomethyl-p-menthane which is similar to the phomasetin substructure, dose-dependently inhibits phm7 activity in vitro and production of phomasetin in the fungus. In terms of biological role, diels-Alderase; part of the gene cluster that mediates the biosynthesis of the trans-fused decalin-containing tetramic acid phomasetin, the stereochemical opposite of the HIV-1 integrase inhibitor equisetin. The PKS module of phm1 together with the enoylreductase phm4 catalyze the formation of the polyketide unit which is then conjugated to L-serine by the condensation domain of the phm1 NRPS module. Activity of the Dieckmann cyclase domain (RED) of phm1 results in release of the Dieckmann product intermediate. The Diels-Alderase phm7 then uses the Dieckmann product of phm1 as substrate and catalyzes the Diels-Alder cycloaddition to form the decalin ring of N-desmethylphomasetin. N-desmethylphomasetin is further methylated to phomasetin by the methyltransferase phm5. The sequence is that of Diels-Alderase phm7 from Pyrenochaetopsis sp.